We begin with the raw amino-acid sequence, 886 residues long: Leucine--tRNA ligase (886 aa).

The 'HIGH' region motif lies at 51–61; sequence PYPSGRIHMGH. Residues 644–648 carry the 'KMSKS' region motif; the sequence is KMSKS. Lys647 provides a ligand contact to ATP.

It belongs to the class-I aminoacyl-tRNA synthetase family.

The protein localises to the cytoplasm. It catalyses the reaction tRNA(Leu) + L-leucine + ATP = L-leucyl-tRNA(Leu) + AMP + diphosphate. In Bartonella tribocorum (strain CIP 105476 / IBS 506), this protein is Leucine--tRNA ligase.